The sequence spans 208 residues: Methyl-CpG-binding domain protein 3-like 3 (208 aa).

This sequence belongs to the MBD3L family.

The protein is Methyl-CpG-binding domain protein 3-like 3 (MBD3L3) of Homo sapiens (Human).